The primary structure comprises 145 residues: D-aminoacyl-tRNA deacylase (145 aa).

Residues 133–134 (GP) carry the Gly-cisPro motif, important for rejection of L-amino acids motif.

It belongs to the DTD family. As to quaternary structure, homodimer.

Its subcellular location is the cytoplasm. It carries out the reaction glycyl-tRNA(Ala) + H2O = tRNA(Ala) + glycine + H(+). It catalyses the reaction a D-aminoacyl-tRNA + H2O = a tRNA + a D-alpha-amino acid + H(+). Its function is as follows. An aminoacyl-tRNA editing enzyme that deacylates mischarged D-aminoacyl-tRNAs. Also deacylates mischarged glycyl-tRNA(Ala), protecting cells against glycine mischarging by AlaRS. Acts via tRNA-based rather than protein-based catalysis; rejects L-amino acids rather than detecting D-amino acids in the active site. By recycling D-aminoacyl-tRNA to D-amino acids and free tRNA molecules, this enzyme counteracts the toxicity associated with the formation of D-aminoacyl-tRNA entities in vivo and helps enforce protein L-homochirality. The protein is D-aminoacyl-tRNA deacylase of Cutibacterium acnes (strain DSM 16379 / KPA171202) (Propionibacterium acnes).